Consider the following 162-residue polypeptide: D-aminoacyl-tRNA deacylase (162 aa).

Residues 143 to 144 (GP) carry the Gly-cisPro motif, important for rejection of L-amino acids motif.

The protein belongs to the DTD family. Homodimer.

The protein resides in the cytoplasm. The enzyme catalyses glycyl-tRNA(Ala) + H2O = tRNA(Ala) + glycine + H(+). It carries out the reaction a D-aminoacyl-tRNA + H2O = a tRNA + a D-alpha-amino acid + H(+). In terms of biological role, an aminoacyl-tRNA editing enzyme that deacylates mischarged D-aminoacyl-tRNAs. Also deacylates mischarged glycyl-tRNA(Ala), protecting cells against glycine mischarging by AlaRS. Acts via tRNA-based rather than protein-based catalysis; rejects L-amino acids rather than detecting D-amino acids in the active site. By recycling D-aminoacyl-tRNA to D-amino acids and free tRNA molecules, this enzyme counteracts the toxicity associated with the formation of D-aminoacyl-tRNA entities in vivo and helps enforce protein L-homochirality. This chain is D-aminoacyl-tRNA deacylase, found in Nitratidesulfovibrio vulgaris (strain ATCC 29579 / DSM 644 / CCUG 34227 / NCIMB 8303 / VKM B-1760 / Hildenborough) (Desulfovibrio vulgaris).